Consider the following 153-residue polypeptide: Mediator of RNA polymerase II transcription subunit 22 (153 aa).

Belongs to the Mediator complex subunit 22 family. As to quaternary structure, component of the Mediator complex.

The protein resides in the nucleus. Functionally, component of the Mediator complex, a coactivator involved in the regulated transcription of nearly all RNA polymerase II-dependent genes. Mediator functions as a bridge to convey information from gene-specific regulatory proteins to the basal RNA polymerase II transcription machinery. Mediator is recruited to promoters by direct interactions with regulatory proteins and serves as a scaffold for the assembly of a functional preinitiation complex with RNA polymerase II and the general transcription factors. This chain is Mediator of RNA polymerase II transcription subunit 22 (mdt-22), found in Caenorhabditis briggsae.